The primary structure comprises 151 residues: Actin-depolymerizing factor 10 (151 aa).

An ADF-H domain is found at 15-149 (PAWIEVPEKS…DLEVLRGRAN (135 aa)).

It belongs to the actin-binding proteins ADF family.

In terms of biological role, actin-depolymerizing protein. Severs actin filaments (F-actin) and binds to actin monomers. The sequence is that of Actin-depolymerizing factor 10 (ADF10) from Oryza sativa subsp. japonica (Rice).